The following is a 241-amino-acid chain: Large ribosomal subunit protein uL2 (241 aa).

Positions methionine 1 to arginine 12 are enriched in basic residues. 2 disordered regions span residues methionine 1–serine 21 and alanine 200–arginine 241.

It belongs to the universal ribosomal protein uL2 family. In terms of assembly, part of the 50S ribosomal subunit. Forms a bridge to the 30S subunit in the 70S ribosome.

In terms of biological role, one of the primary rRNA binding proteins. Required for association of the 30S and 50S subunits to form the 70S ribosome, for tRNA binding and peptide bond formation. It has been suggested to have peptidyltransferase activity; this is somewhat controversial. Makes several contacts with the 16S rRNA in the 70S ribosome. This chain is Large ribosomal subunit protein uL2, found in Methanothermobacter thermautotrophicus (strain ATCC 29096 / DSM 1053 / JCM 10044 / NBRC 100330 / Delta H) (Methanobacterium thermoautotrophicum).